A 557-amino-acid chain; its full sequence is Formate--tetrahydrofolate ligase (557 aa).

65–72 (TPAGEGKT) lines the ATP pocket.

The protein belongs to the formate--tetrahydrofolate ligase family.

It catalyses the reaction (6S)-5,6,7,8-tetrahydrofolate + formate + ATP = (6R)-10-formyltetrahydrofolate + ADP + phosphate. It functions in the pathway one-carbon metabolism; tetrahydrofolate interconversion. This is Formate--tetrahydrofolate ligase from Methylorubrum populi (strain ATCC BAA-705 / NCIMB 13946 / BJ001) (Methylobacterium populi).